Reading from the N-terminus, the 471-residue chain is G2/mitotic-specific cyclin-1 (471 aa).

This sequence belongs to the cyclin family. Cyclin AB subfamily.

Its function is as follows. Essential for the control of the cell cycle at the G2/M (mitosis) transition. Interacts with the CDC2 protein kinase to form MPF. G2/M cyclins accumulate steadily during G2 and are abruptly destroyed at mitosis. This Saccharomyces cerevisiae (strain ATCC 204508 / S288c) (Baker's yeast) protein is G2/mitotic-specific cyclin-1 (CLB1).